Consider the following 268-residue polypeptide: Ribosomal RNA small subunit methyltransferase A (268 aa).

S-adenosyl-L-methionine is bound by residues asparagine 10, isoleucine 12, glycine 37, glutamate 58, aspartate 83, and asparagine 107.

Belongs to the class I-like SAM-binding methyltransferase superfamily. rRNA adenine N(6)-methyltransferase family. RsmA subfamily.

It localises to the cytoplasm. It catalyses the reaction adenosine(1518)/adenosine(1519) in 16S rRNA + 4 S-adenosyl-L-methionine = N(6)-dimethyladenosine(1518)/N(6)-dimethyladenosine(1519) in 16S rRNA + 4 S-adenosyl-L-homocysteine + 4 H(+). Its function is as follows. Specifically dimethylates two adjacent adenosines (A1518 and A1519) in the loop of a conserved hairpin near the 3'-end of 16S rRNA in the 30S particle. May play a critical role in biogenesis of 30S subunits. This Caldanaerobacter subterraneus subsp. tengcongensis (strain DSM 15242 / JCM 11007 / NBRC 100824 / MB4) (Thermoanaerobacter tengcongensis) protein is Ribosomal RNA small subunit methyltransferase A.